A 36-amino-acid polypeptide reads, in one-letter code: Photosystem I reaction center subunit VIII (36 aa).

A helical transmembrane segment spans residues 9–29 (IFVPLVGLVFPAIAMASLSLY).

This sequence belongs to the PsaI family.

Its subcellular location is the plastid. It localises to the chloroplast thylakoid membrane. In terms of biological role, may help in the organization of the PsaL subunit. This is Photosystem I reaction center subunit VIII from Phalaenopsis aphrodite subsp. formosana (Moth orchid).